Here is a 373-residue protein sequence, read N- to C-terminus: UDP-N-acetylenolpyruvoylglucosamine reductase (373 aa).

Residues 30–203 form the FAD-binding PCMH-type domain; it reads LACMADSVVT…SRVGFRLHTD (174 aa). The active site involves arginine 180. The Proton donor role is filled by serine 258. Residue glutamate 356 is part of the active site.

Belongs to the MurB family. FAD serves as cofactor.

It localises to the cytoplasm. The enzyme catalyses UDP-N-acetyl-alpha-D-muramate + NADP(+) = UDP-N-acetyl-3-O-(1-carboxyvinyl)-alpha-D-glucosamine + NADPH + H(+). It functions in the pathway cell wall biogenesis; peptidoglycan biosynthesis. Functionally, cell wall formation. This is UDP-N-acetylenolpyruvoylglucosamine reductase from Psychrobacter cryohalolentis (strain ATCC BAA-1226 / DSM 17306 / VKM B-2378 / K5).